The sequence spans 295 residues: MSKIRGLPPAIRDPGPGVELGVENGLLCQLIHSPEFNLFSDSVVFESTFIQVTKQGNWMDAYERSATIILGVTSSVPSLPLPNILLMANVTWPQGPFSTCSTLGAPVITLSRILPLKYVELQIYDRTQRILRVRTVTEKIYYLRLHEKHPQAVFRFWIRLVKILQKGLSITTKDPRIHFTHCLVPKMPNSSTETTPESSRPASSQSSETIMLLAAERAGSSVLDLSNRHRFSEDRYTDTKTDNSSNCKTASPVASLIGMPMRATLIHSLWEQEDSCETLLQAPVASSLGDNFLGP.

The tract at residues 187–206 (MPNSSTETTPESSRPASSQS) is disordered. Residues 190–206 (SSTETTPESSRPASSQS) show a composition bias toward low complexity. S220, S221, S251, and S255 each carry phosphoserine.

This sequence belongs to the GARIN family. Interacts (via N-terminus) with RAB2B (in GTP-bound form).

The protein localises to the golgi apparatus. Functionally, RAB2B effector protein required for accurate acrosome formation and normal male fertility. The sequence is that of Golgi-associated RAB2 interactor protein 1A (Garin1a) from Rattus norvegicus (Rat).